A 767-amino-acid polypeptide reads, in one-letter code: MTISPPERGSDAKSQVEKVDNPATFELFGKPGHFDRALAKGPKTTTWVWNLHANAHDFDAHTSDLQEVSRRIFSAHFGHLAVIFIWLSGAFFHGARFSNYSGWLADPTHVKPSAQVVWPIFGQEILNGDMGAGFNGIQITSGLFHVWRGWGITSETQLMALAIGALVMAGLMLNAGVFHYHKSAPKLEWFQNVESMLNHHLAGLLGLGSLSWAGHLIHVSLPVTKLMDAIDAGEPLVLNGTTIASAADIPLPHEFFNQDLLAQLYPGIGSGISAFFSGNWAAYGDFLTFKGGLNPVTGSLWMTDIAHHHVAIAVLFIVAGHMYRTNWGIGHSIKEIHEGQKGDPLLFPAPNGHDGLYEFMTTSWHAQLAVNLAMLGSLSIIVAQHMYAMPPYAYMAVDYPTQIGLFTHHIWIGGFLIVGGAAHAAIAMVRDYDPAKHIDNVLDRVLKARDAIISHLNWVCIWLGAHSFGLYIHNDTMRALGRPQDMFSDQAISIQPIFAQWIQNAHAAAAGSTAPNALAGVSEVFNGSVVAVGGKVAAAPMPLGTADFMVHHIHAFTIHVTVLILLKGVLYARSSRLIPDKANLGFRFSCDGPGRGGTCQVSAWDHVFLGLFWMYNSLSIVIFHFSWKMQSDIWGTVNADGSVAHITNGNFAQSAITINGWLRDYLWAQAVQVINSYGSSTSAYGIMFLGAHFIWAFSLMFLFSGRGYWQELIESIVWAHNKLKVAPAIQPRALSIIQGRAVGVAHYLLGGIATTWAFFHAHILVVG.

8 helical membrane passes run 72–95, 158–181, 197–221, 305–323, 364–387, 403–429, 451–473, and 548–566; these read IFSA…FHGA, LMAL…FHYH, LNHH…HVSL, IAHH…GHMY, WHAQ…QHMY, IGLF…IAMV, AIIS…LYIH, and FMVH…LILL. 2 residues coordinate [4Fe-4S] cluster: cysteine 590 and cysteine 599. Helical transmembrane passes span 606-627 and 681-703; these read HVFL…HFSW and TSAY…MFLF. Histidine 692 contacts chlorophyll a'. 2 residues coordinate chlorophyll a: methionine 700 and tyrosine 708. Tryptophan 709 is a phylloquinone binding site. The helical transmembrane segment at 741-761 threads the bilayer; it reads AVGVAHYLLGGIATTWAFFHA.

It belongs to the PsaA/PsaB family. In terms of assembly, the PsaA/B heterodimer binds the P700 chlorophyll special pair and subsequent electron acceptors. PSI consists of a core antenna complex that captures photons, and an electron transfer chain that converts photonic excitation into a charge separation. The cyanobacterial PSI reaction center is composed of one copy each of PsaA,B,C,D,E,F,I,J,K,L,M and X, and forms trimeric complexes. PSI electron transfer chain: 5 chlorophyll a, 1 chlorophyll a', 2 phylloquinones and 3 4Fe-4S clusters. PSI core antenna: 90 chlorophyll a, 22 carotenoids, 3 phospholipids and 1 galactolipid. P700 is a chlorophyll a/chlorophyll a' dimer, A0 is one or more chlorophyll a, A1 is one or both phylloquinones and FX is a shared 4Fe-4S iron-sulfur center. serves as cofactor.

The protein localises to the cellular thylakoid membrane. It carries out the reaction reduced [plastocyanin] + hnu + oxidized [2Fe-2S]-[ferredoxin] = oxidized [plastocyanin] + reduced [2Fe-2S]-[ferredoxin]. PsaA and PsaB bind P700, the primary electron donor of photosystem I (PSI), as well as the electron acceptors A0, A1 and FX. PSI is a plastocyanin/cytochrome c6-ferredoxin oxidoreductase, converting photonic excitation into a charge separation, which transfers an electron from the donor P700 chlorophyll pair to the spectroscopically characterized acceptors A0, A1, FX, FA and FB in turn. Oxidized P700 is reduced on the lumenal side of the thylakoid membrane by plastocyanin or cytochrome c6. In Synechococcus sp. (strain CC9902), this protein is Photosystem I P700 chlorophyll a apoprotein A1.